We begin with the raw amino-acid sequence, 480 residues long: ATP synthase subunit beta 1 (480 aa).

Residue 154 to 161 participates in ATP binding; it reads GGAGVGKT.

This sequence belongs to the ATPase alpha/beta chains family. As to quaternary structure, F-type ATPases have 2 components, CF(1) - the catalytic core - and CF(0) - the membrane proton channel. CF(1) has five subunits: alpha(3), beta(3), gamma(1), delta(1), epsilon(1). CF(0) has four main subunits: a(1), b(1), b'(1) and c(9-12).

It is found in the cell inner membrane. It carries out the reaction ATP + H2O + 4 H(+)(in) = ADP + phosphate + 5 H(+)(out). In terms of biological role, produces ATP from ADP in the presence of a proton gradient across the membrane. The catalytic sites are hosted primarily by the beta subunits. This Chlorobaculum tepidum (strain ATCC 49652 / DSM 12025 / NBRC 103806 / TLS) (Chlorobium tepidum) protein is ATP synthase subunit beta 1.